The chain runs to 549 residues: Urocanate hydratase (549 aa).

NAD(+)-binding positions include 46 to 47 (GG), Gln124, 170 to 172 (GMG), Glu190, Arg195, 236 to 237 (NA), 257 to 261 (QTSAH), 267 to 268 (YV), and Tyr316. Cys404 is an active-site residue. Gly486 lines the NAD(+) pocket.

The protein belongs to the urocanase family. It depends on NAD(+) as a cofactor.

The protein localises to the cytoplasm. The catalysed reaction is 4-imidazolone-5-propanoate = trans-urocanate + H2O. It participates in amino-acid degradation; L-histidine degradation into L-glutamate; N-formimidoyl-L-glutamate from L-histidine: step 2/3. In terms of biological role, catalyzes the conversion of urocanate to 4-imidazolone-5-propionate. The sequence is that of Urocanate hydratase from Caldanaerobacter subterraneus subsp. tengcongensis (strain DSM 15242 / JCM 11007 / NBRC 100824 / MB4) (Thermoanaerobacter tengcongensis).